The primary structure comprises 72 residues: Translation initiation factor IF-1 (72 aa).

The S1-like domain maps to 2-72 (AKEDCIEMQG…SKGRIIFRSR (71 aa)).

It belongs to the IF-1 family. In terms of assembly, component of the 30S ribosomal translation pre-initiation complex which assembles on the 30S ribosome in the order IF-2 and IF-3, IF-1 and N-formylmethionyl-tRNA(fMet); mRNA recruitment can occur at any time during PIC assembly.

The protein resides in the cytoplasm. In terms of biological role, one of the essential components for the initiation of protein synthesis. Stabilizes the binding of IF-2 and IF-3 on the 30S subunit to which N-formylmethionyl-tRNA(fMet) subsequently binds. Helps modulate mRNA selection, yielding the 30S pre-initiation complex (PIC). Upon addition of the 50S ribosomal subunit IF-1, IF-2 and IF-3 are released leaving the mature 70S translation initiation complex. This chain is Translation initiation factor IF-1, found in Haemophilus influenzae (strain ATCC 51907 / DSM 11121 / KW20 / Rd).